Reading from the N-terminus, the 169-residue chain is Der GTPase-activating protein YihI (169 aa).

2 disordered regions span residues 1 to 98 (MKPS…PQAE) and 144 to 169 (GLSY…LRGN). Basic residues predominate over residues 10 to 19 (SKGHAKARRK). The segment covering 20–30 (TREELDQEARD) has biased composition (basic and acidic residues). Residues 31 to 40 (RKRQKKRRGH) show a composition bias toward basic residues. A compositionally biased stretch (polar residues) spans 49-58 (GNTTSGSKGQ). Residues 147–159 (YDDDEEEEEDEKQ) are compositionally biased toward acidic residues. Basic and acidic residues predominate over residues 160–169 (EDMMRLLRGN).

It belongs to the YihI family. Interacts with Der.

In terms of biological role, a GTPase-activating protein (GAP) that modifies Der/EngA GTPase function. May play a role in ribosome biogenesis. This Escherichia coli O139:H28 (strain E24377A / ETEC) protein is Der GTPase-activating protein YihI.